Consider the following 318-residue polypeptide: Olfactory receptor 5M5 (318 aa).

At 1 to 31 (MLAPKKMVRGNYSMVTEFILLGLTDRPELQP) the chain is on the extracellular side. A glycan (N-linked (GlcNAc...) asparagine) is linked at asparagine 11. The chain crosses the membrane as a helical span at residues 32 to 52 (LLFVLFLVIYLITVGGNLGMM). Over 53–60 (VLIRIDSR) the chain is Cytoplasmic. A helical transmembrane segment spans residues 61-81 (LHTPMYYFLASLSCLDLCYST). Topologically, residues 82–105 (NVTPKMLVNFLSEKKTISYAACLV) are extracellular. A disulfide bridge connects residues cysteine 103 and cysteine 195. A helical transmembrane segment spans residues 106 to 126 (QCYFFIAMVITEYYMLAVMAY). Residues 127–139 (DRYMAICNPLLYS) lie on the Cytoplasmic side of the membrane. The helical transmembrane segment at 140 to 160 (SKMSKGVCVRLIAGPYIYGFL) threads the bilayer. The Extracellular portion of the chain corresponds to 161 to 202 (SGLMETMWTYRLTFCGSNIINHFYCADPPLIRLSCSDTFIKE). A helical membrane pass occupies residues 203–223 (TSMFVVAGFNLSNSLFIILIS). The Cytoplasmic segment spans residues 224 to 243 (YLFILIAILRMRSAEGRRKA). A helical membrane pass occupies residues 244–264 (FSTCGSHLVAVTVFYGTLFCM). Topologically, residues 265–277 (YVRPPTDKSVEQS) are extracellular. The chain crosses the membrane as a helical span at residues 278 to 298 (KIIAVFYTFVSPMLNPIIYSL). Over 299–318 (RNKDVKHAFWKLVRRNVLSK) the chain is Cytoplasmic.

The protein belongs to the G-protein coupled receptor 1 family.

The protein localises to the cell membrane. Its function is as follows. Potential odorant receptor. This is Olfactory receptor 5M5 from Mus musculus (Mouse).